Consider the following 122-residue polypeptide: Large ribosomal subunit protein uL14 (122 aa).

In terms of assembly, forms a cluster with proteins L3 and L19. In the 70S ribosome, L14 and L19 interact and together make contacts with the 16S rRNA in bridges B5 and B8. Part of the 50S ribosomal subunit.

In terms of biological role, binds to 23S rRNA. Forms part of two intersubunit bridges in the 70S ribosome. This Rhodopseudomonas palustris (strain ATCC BAA-98 / CGA009) protein is Large ribosomal subunit protein uL14.